The chain runs to 715 residues: MDMTSAFTLNVRLDNVAVVSIDVPGEKMNTLKAEFATQVRAILKQIRENKALRGVVFISAKPDNFIAGADINMIGNCKSAQEAETLARQGQQIMAEIQALSVPVVAAIHGACLGGGLEMALACHRRICTDDAKTVLGLPEVQLGLLPGSGGTQRLPRLVGVSTALDMILTGKQLRPKQALRVGLVDEVVPHAILLEAAVELAIKGRSAQRNLPVRERILAGPLGRTLLFRMVSKKTGQKTQGNYPATERILEVIETGLAQGSSSGYDAEARAFGELAMTPQSQALRNIFFASTEVKKDPGSDAQPGPLASVGVLGGGLMGGGIAYVTACKGGLSVRIKDINAKGINHALKYSWDQLETKVRRRHIKAGERDKQLALISGSTDYRGFSHRDLVIEAVFEDLALKQQMVAEVEQNCAPHTIFASNTSSLPIGDIAANAARPEQVIGLHFFSPVEKMPLVEVIPHATTSAQTIATTVKLAKKQGKTPIVVSDKAGFYVNRILAPYINEAIRLLTEGERVEAIDAALVKFGFPVGPIQLLDEVGIDTGTKIIPVLEAAYGERFSAPANVVASILNDDRKGRKNGRGFYLYGVKGRKSKKQVDPAIYRLIGTQGQSRLSAQQMAERCVMLMLNEAARCFDEKVIRSARDGDIGAVFGIGFPPFLGGPFRYMDTLGAGEVVAVLQRLATQYGDRFTPCERLLRMAERGERFWNSGETDLKE.

Residues 1–190 (MDMTSAFTLN…RVGLVDEVVP (190 aa)) are enoyl-CoA hydratase. Residues 306-715 (GPLASVGVLG…WNSGETDLKE (410 aa)) are 3-hydroxyacyl-CoA dehydrogenase.

The protein in the N-terminal section; belongs to the enoyl-CoA hydratase/isomerase family. It in the central section; belongs to the 3-hydroxyacyl-CoA dehydrogenase family. As to quaternary structure, heterotetramer of two alpha chains (FadJ) and two beta chains (FadI).

It localises to the cytoplasm. It catalyses the reaction a (3S)-3-hydroxyacyl-CoA = a (2E)-enoyl-CoA + H2O. It carries out the reaction a 4-saturated-(3S)-3-hydroxyacyl-CoA = a (3E)-enoyl-CoA + H2O. The catalysed reaction is a (3S)-3-hydroxyacyl-CoA + NAD(+) = a 3-oxoacyl-CoA + NADH + H(+). The enzyme catalyses (3S)-3-hydroxybutanoyl-CoA = (3R)-3-hydroxybutanoyl-CoA. It participates in lipid metabolism; fatty acid beta-oxidation. Functionally, catalyzes the formation of a hydroxyacyl-CoA by addition of water on enoyl-CoA. Also exhibits 3-hydroxyacyl-CoA epimerase and 3-hydroxyacyl-CoA dehydrogenase activities. The chain is Fatty acid oxidation complex subunit alpha from Citrobacter koseri (strain ATCC BAA-895 / CDC 4225-83 / SGSC4696).